The sequence spans 332 residues: Lipoyl synthase (332 aa).

7 residues coordinate [4Fe-4S] cluster: cysteine 79, cysteine 84, cysteine 90, cysteine 105, cysteine 109, cysteine 112, and serine 319. The Radical SAM core domain occupies 91–308 (FSHGTATFMI…ADYGYEIGFK (218 aa)).

The protein belongs to the radical SAM superfamily. Lipoyl synthase family. The cofactor is [4Fe-4S] cluster.

The protein localises to the cytoplasm. It catalyses the reaction [[Fe-S] cluster scaffold protein carrying a second [4Fe-4S](2+) cluster] + N(6)-octanoyl-L-lysyl-[protein] + 2 oxidized [2Fe-2S]-[ferredoxin] + 2 S-adenosyl-L-methionine + 4 H(+) = [[Fe-S] cluster scaffold protein] + N(6)-[(R)-dihydrolipoyl]-L-lysyl-[protein] + 4 Fe(3+) + 2 hydrogen sulfide + 2 5'-deoxyadenosine + 2 L-methionine + 2 reduced [2Fe-2S]-[ferredoxin]. It functions in the pathway protein modification; protein lipoylation via endogenous pathway; protein N(6)-(lipoyl)lysine from octanoyl-[acyl-carrier-protein]: step 2/2. Its function is as follows. Catalyzes the radical-mediated insertion of two sulfur atoms into the C-6 and C-8 positions of the octanoyl moiety bound to the lipoyl domains of lipoate-dependent enzymes, thereby converting the octanoylated domains into lipoylated derivatives. This chain is Lipoyl synthase, found in Hahella chejuensis (strain KCTC 2396).